We begin with the raw amino-acid sequence, 298 residues long: Protein transport protein SEC13-1 (298 aa).

WD repeat units follow at residues 7-46 (AHND…HKLV), 51-92 (GHEG…WSQI), 97-138 (VHTA…TATP), 143-196 (AHAI…QSYL), 203-245 (GHSD…GPWV), and 253-292 (EFPD…KWES).

Belongs to the WD repeat SEC13 family. In terms of assembly, the COPII coat is composed of at least 5 proteins: the SEC23/24 complex, the SEC13/31 complex, and the protein SAR1. Component of the nuclear pore complex (NPC). NPC constitutes the exclusive means of nucleocytoplasmic transport. NPCs allow the passive diffusion of ions and small molecules and the active, nuclear transport receptor-mediated bidirectional transport of macromolecules such as proteins, RNAs, ribonucleoparticles (RNPs), and ribosomal subunits across the nuclear envelope. Due to its 8-fold rotational symmetry, all subunits are present with 8 copies or multiples thereof.

It is found in the cytoplasmic vesicle. The protein resides in the COPII-coated vesicle membrane. It localises to the endoplasmic reticulum membrane. The protein localises to the nucleus. Its subcellular location is the nuclear pore complex. In terms of biological role, component of the coat protein complex II (COPII) which promotes the formation of transport vesicles from the endoplasmic reticulum (ER). The coat has two main functions, the physical deformation of the endoplasmic reticulum membrane into vesicles and the selection of cargo molecules. It also functions as a component of the nuclear pore complex (NPC). NPC components, collectively referred to as nucleoporins (NUPs), can play the role of both NPC structural components and of docking or interaction partners for transiently associated nuclear transport factors. SEC13 is required for efficient mRNA export from the nucleus to the cytoplasm and for correct nuclear pore biogenesis and distribution. The protein is Protein transport protein SEC13-1 (SEC131) of Candida glabrata (strain ATCC 2001 / BCRC 20586 / JCM 3761 / NBRC 0622 / NRRL Y-65 / CBS 138) (Yeast).